The primary structure comprises 192 residues: Protein FAM210B, mitochondrial (192 aa).

Residues 1–58 constitute a mitochondrion transit peptide; it reads MAGLLALLGPAGRVGARVRPRATWLLGATAPCAPPPLALALLPPRLDARLLRTARGDC. The segment at 57–80 is disordered; the sequence is DCRGHQDPSQATGTTGSSVSCTEE. A compositionally biased stretch (polar residues) spans 63–77; sequence DPSQATGTTGSSVSC. Positions 80-191 constitute a DUF1279 domain; sequence EKKQSKSQQL…VGFFKPPAAK (112 aa). A run of 2 helical transmembrane segments spans residues 99 to 119 and 150 to 170; these read VGVS…YMVV and FVVA…ITLV.

The protein belongs to the FAM210 family. In terms of tissue distribution, expressed in late erythroblast differentiation stages. Underexpressed in ovarian cancer epithelia cells compared with normal human ovarian surface epithelia.

Its subcellular location is the mitochondrion. The protein resides in the mitochondrion outer membrane. Plays a role in erythroid differentiation. Involved in cell proliferation and tumor cell growth suppression. Involved in the metabolic reprogramming of cancer cells in a PDK4-dependent manner. This is Protein FAM210B, mitochondrial from Homo sapiens (Human).